We begin with the raw amino-acid sequence, 461 residues long: Fumarate hydratase class II (461 aa).

Residues S97–T99, H127–D130, S137–N139, and T185 each bind substrate. H186 serves as the catalytic Proton donor/acceptor. Residue S316 is part of the active site. Residues S317 and K322 to N324 each bind substrate.

The protein belongs to the class-II fumarase/aspartase family. Fumarase subfamily. In terms of assembly, homotetramer.

Its subcellular location is the cytoplasm. The enzyme catalyses (S)-malate = fumarate + H2O. Its pathway is carbohydrate metabolism; tricarboxylic acid cycle; (S)-malate from fumarate: step 1/1. Its function is as follows. Involved in the TCA cycle. Catalyzes the stereospecific interconversion of fumarate to L-malate. The polypeptide is Fumarate hydratase class II (Staphylococcus aureus (strain COL)).